A 49-amino-acid polypeptide reads, in one-letter code: Large ribosomal subunit protein bL33C (49 aa).

The segment at 21–49 (KNKRNNPDRVEFKKYCPRDKKSTLHRETK) is disordered. Residues 25–49 (NNPDRVEFKKYCPRDKKSTLHRETK) show a composition bias toward basic and acidic residues.

It belongs to the bacterial ribosomal protein bL33 family.

The protein is Large ribosomal subunit protein bL33C of Bacillus licheniformis (strain ATCC 14580 / DSM 13 / JCM 2505 / CCUG 7422 / NBRC 12200 / NCIMB 9375 / NCTC 10341 / NRRL NRS-1264 / Gibson 46).